The primary structure comprises 299 residues: Glutamyl-Q tRNA(Asp) synthetase (299 aa).

L-glutamate is bound by residues 18–22 (RFAPS) and E54. The 'HIGH' region signature appears at 21–31 (PSPSGALHFGS). Zn(2+) contacts are provided by C110, C112, Y124, and C128. Residues Y181 and R199 each contribute to the L-glutamate site. A 'KMSKS' region motif is present at residues 237–241 (KLSKQ). K240 contacts ATP.

It belongs to the class-I aminoacyl-tRNA synthetase family. GluQ subfamily. The cofactor is Zn(2+).

Catalyzes the tRNA-independent activation of glutamate in presence of ATP and the subsequent transfer of glutamate onto a tRNA(Asp). Glutamate is transferred on the 2-amino-5-(4,5-dihydroxy-2-cyclopenten-1-yl) moiety of the queuosine in the wobble position of the QUC anticodon. The protein is Glutamyl-Q tRNA(Asp) synthetase of Shewanella oneidensis (strain ATCC 700550 / JCM 31522 / CIP 106686 / LMG 19005 / NCIMB 14063 / MR-1).